Reading from the N-terminus, the 208-residue chain is Small ribosomal subunit protein uS4 (208 aa).

The region spanning 98–161 (QRLDNVVYRM…KTNSQILRAI (64 aa)) is the S4 RNA-binding domain.

The protein belongs to the universal ribosomal protein uS4 family. As to quaternary structure, part of the 30S ribosomal subunit. Contacts protein S5. The interaction surface between S4 and S5 is involved in control of translational fidelity.

One of the primary rRNA binding proteins, it binds directly to 16S rRNA where it nucleates assembly of the body of the 30S subunit. In terms of biological role, with S5 and S12 plays an important role in translational accuracy. The sequence is that of Small ribosomal subunit protein uS4 from Sulfurovum sp. (strain NBC37-1).